The sequence spans 627 residues: uncharacterized protein (627 aa).

Basic and acidic residues predominate over residues 1 to 20 (MAKFKKDLTTKNKDTDRLSE). Disordered regions lie at residues 1–22 (MAKFKKDLTTKNKDTDRLSEEI) and 578–606 (LSLGSEEEQGQEETEASIQNAGDKKLLPV). Residues 582–592 (SEEEQGQEETE) show a composition bias toward acidic residues.

This is an uncharacterized protein from Rickettsia prowazekii (strain Madrid E).